The primary structure comprises 827 residues: Cell surface glycoprotein (827 aa).

Residues 1–34 (MTKLKDQTRAILLATLMVTSVFAGAIAFTGSAAA) form the signal peptide. N-linked (Glc...) asparagine glycosylation occurs at asparagine 47. Over residues 73-102 (PLLTGTAGNSEGVSLDLSSPIPQTTENQPL) the composition is skewed to polar residues. The disordered stretch occupies residues 73-111 (PLLTGTAGNSEGVSLDLSSPIPQTTENQPLGTYDVDGSG). N-linked (Glc...) asparagine glycans are attached at residues asparagine 117, asparagine 308, asparagine 313, asparagine 532, and asparagine 766. Residues 755-804 (SEREDTTTSSDNATDTTTTTDGPTETTTTAEPTETTEEPTEETTTSSNTP) are disordered. The span at 761–787 (TTSSDNATDTTTTTDGPTETTTTAEPT) shows a compositional bias: low complexity. Residues 804–806 (PGF) carry the PGF sorting signal motif. Residues 804–823 (PGFGIAVALVALVGAALLAL) traverse the membrane as a helical segment.

Belongs to the halobacterial S-layer protein family. In terms of processing, O-glycosylated on 4 to 6 threonine residues; glycans consist of Glc-Gal disaccharides. The N-terminus is not blocked. Post-translationally, cleaved by the archaeosortase ArtA at the C-terminus, with removal of a short hydrophobic segment. In terms of processing, lipidation: Following protein translocation across the membrane, the protein is modified by a derivative of mevalonic acid. Lipid modification is ArtA-dependent and requires the conserved C-terminal PGF motif. Asn-47 and Asn-117 are glycosylated by a pentasaccharide comprising a hexose, 2 hexuronic acids, a methyl ester of a hexuronic acid and mannose. The pentasaccharide is produced in 2 steps: first, a tetrasaccharide is built on dolichol-P and then transferred to the S-layer glycoprotein. Then, the mannose fifth sugar is attached to a distinct molecule of dolichol-P and is transferred to the protein already carrying the tetrasaccharide. The pentasaccharide on Asn-47 was initially thought to contain mannose, galactose, glucose and idose with a relative ratio of 1/3/3/0.2. However, it was later shown that it is not the case. Under low-salt conditions (1.75 M instead of 3.4 M), a tetrasaccharide consisting of a sulfated hexose, 2 hexoses and rhamnose is attached to Asn-532.

The protein resides in the secreted. It localises to the cell wall. It is found in the S-layer. Its subcellular location is the cell membrane. Its function is as follows. S-layer protein. The S-layer is a paracrystalline mono-layered assembly of proteins which coat the surface of the cell. In Haloferax volcanii (strain ATCC 29605 / DSM 3757 / JCM 8879 / NBRC 14742 / NCIMB 2012 / VKM B-1768 / DS2) (Halobacterium volcanii), this protein is Cell surface glycoprotein (csg).